A 209-amino-acid polypeptide reads, in one-letter code: Large ribosomal subunit protein uL3 (209 aa).

The segment at 127-153 (NASRGPMSHGSKFHRAPGSMGAASDPS) is disordered.

Belongs to the universal ribosomal protein uL3 family. As to quaternary structure, part of the 50S ribosomal subunit. Forms a cluster with proteins L14 and L19.

Its function is as follows. One of the primary rRNA binding proteins, it binds directly near the 3'-end of the 23S rRNA, where it nucleates assembly of the 50S subunit. The polypeptide is Large ribosomal subunit protein uL3 (Clostridium perfringens (strain SM101 / Type A)).